We begin with the raw amino-acid sequence, 431 residues long: Cleavage stimulation factor subunit 1 (431 aa).

Positions 14–35 (LYKLIISQLLYDGYISIANGLI) are hydrophobic. 6 WD repeats span residues 106–145 (SHKG…AKSA), 171–210 (DHVD…AKRA), 215–254 (QEAE…CFVS), 260–301 (QHTD…TTFE), 303–343 (AHDG…TLVR), and 395–430 (GHNN…RSTT).

As to quaternary structure, homodimer. The CSTF complex is composed of CSTF1 (50 kDa subunit), CSTF2 (64 kDa subunit) and CSTF3 (77 kDa subunit). Interacts (via repeats WD) directly with CSTF3. Interacts (via repeat WD6) with BARD1. Interacts with ERCC6. The N-terminus is blocked.

The protein localises to the nucleus. Its function is as follows. One of the multiple factors required for polyadenylation and 3'-end cleavage of mammalian pre-mRNAs. May be responsible for the interaction of CSTF with other factors to form a stable complex on the pre-mRNA. This is Cleavage stimulation factor subunit 1 (CSTF1) from Homo sapiens (Human).